We begin with the raw amino-acid sequence, 67 residues long: MRILYLLLSVLFVVLQGVAGQPYFSSPIHACRYQRGVCIPGPCRWPYYRVGSCGSGLKSCCVRNRWA.

An N-terminal signal peptide occupies residues 1 to 19 (MRILYLLLSVLFVVLQGVA). Positions 20–25 (GQPYFS) are excised as a propeptide. 3 cysteine pairs are disulfide-bonded: Cys31/Cys60, Cys38/Cys53, and Cys43/Cys61.

The protein belongs to the beta-defensin family. As to expression, expressed in bone marrow, testis, ovary, lung and trachea. Expressed in the ovarian stroma, but not in the ovarian follicles.

It is found in the secreted. It localises to the cytoplasmic granule. Functionally, has bactericidal activity. Potent activity against S.typhimurium and S.entiriditis. In Gallus gallus (Chicken), this protein is Gallinacin-6 (GAL6).